Here is a 921-residue protein sequence, read N- to C-terminus: TRPM8 channel-associated factor 1 (921 aa).

A Peptidase M60 domain is found at 542–841 (YCWMSTGLYI…TYLQLQEAFG (300 aa)).

This sequence belongs to the TCAF family. In terms of assembly, interacts with TRPM8 (via N-terminus and C-terminus domains); the interaction inhibits TRPM8 channel activity. Interacts with TRPV6.

It is found in the cell membrane. Its function is as follows. Positively regulates the plasma membrane cation channel TRPM8 activity. Involved in the recruitment of TRPM8 to the cell surface. Promotes prostate cancer cell migration inhibition in a TRPM8-dependent manner. The chain is TRPM8 channel-associated factor 1 from Pongo abelii (Sumatran orangutan).